Here is a 258-residue protein sequence, read N- to C-terminus: Imidazole glycerol phosphate synthase subunit HisF (258 aa).

Residues Asp-11 and Asp-130 contribute to the active site.

It belongs to the HisA/HisF family. As to quaternary structure, heterodimer of HisH and HisF.

It is found in the cytoplasm. The catalysed reaction is 5-[(5-phospho-1-deoxy-D-ribulos-1-ylimino)methylamino]-1-(5-phospho-beta-D-ribosyl)imidazole-4-carboxamide + L-glutamine = D-erythro-1-(imidazol-4-yl)glycerol 3-phosphate + 5-amino-1-(5-phospho-beta-D-ribosyl)imidazole-4-carboxamide + L-glutamate + H(+). Its pathway is amino-acid biosynthesis; L-histidine biosynthesis; L-histidine from 5-phospho-alpha-D-ribose 1-diphosphate: step 5/9. Its function is as follows. IGPS catalyzes the conversion of PRFAR and glutamine to IGP, AICAR and glutamate. The HisF subunit catalyzes the cyclization activity that produces IGP and AICAR from PRFAR using the ammonia provided by the HisH subunit. The sequence is that of Imidazole glycerol phosphate synthase subunit HisF from Citrobacter koseri (strain ATCC BAA-895 / CDC 4225-83 / SGSC4696).